The following is a 156-amino-acid chain: Lipoprotein signal peptidase (156 aa).

2 helical membrane passes run 57-77 (LFLI…LFIN) and 83-103 (ILKI…IDRI). Catalysis depends on residues D110 and D129. Residues 124–144 (IFNIADVLVSLGTILLIIFII) form a helical membrane-spanning segment.

Belongs to the peptidase A8 family.

Its subcellular location is the cell membrane. The enzyme catalyses Release of signal peptides from bacterial membrane prolipoproteins. Hydrolyzes -Xaa-Yaa-Zaa-|-(S,diacylglyceryl)Cys-, in which Xaa is hydrophobic (preferably Leu), and Yaa (Ala or Ser) and Zaa (Gly or Ala) have small, neutral side chains.. It participates in protein modification; lipoprotein biosynthesis (signal peptide cleavage). This protein specifically catalyzes the removal of signal peptides from prolipoproteins. This Clostridium tetani (strain Massachusetts / E88) protein is Lipoprotein signal peptidase.